A 296-amino-acid chain; its full sequence is Bifunctional protein FolD (296 aa).

Residues 168–170 (GRS), serine 197, and threonine 238 contribute to the NADP(+) site.

Belongs to the tetrahydrofolate dehydrogenase/cyclohydrolase family. As to quaternary structure, homodimer.

The catalysed reaction is (6R)-5,10-methylene-5,6,7,8-tetrahydrofolate + NADP(+) = (6R)-5,10-methenyltetrahydrofolate + NADPH. It catalyses the reaction (6R)-5,10-methenyltetrahydrofolate + H2O = (6R)-10-formyltetrahydrofolate + H(+). It functions in the pathway one-carbon metabolism; tetrahydrofolate interconversion. Its function is as follows. Catalyzes the oxidation of 5,10-methylenetetrahydrofolate to 5,10-methenyltetrahydrofolate and then the hydrolysis of 5,10-methenyltetrahydrofolate to 10-formyltetrahydrofolate. In Porphyromonas gingivalis (strain ATCC BAA-308 / W83), this protein is Bifunctional protein FolD.